We begin with the raw amino-acid sequence, 437 residues long: U1 small nuclear ribonucleoprotein 70 kDa (437 aa).

T2 bears the N-acetylthreonine mark. Positions 48 to 79 (FEDPRDAPPPTRAETREERMERKRREKIERRQ) are disordered. Residues 60–79 (AETREERMERKRREKIERRQ) show a composition bias toward basic and acidic residues. Positions 92–202 (HNDPNAQGDA…GGGLGGTRRG (111 aa)) are required for interaction with U1 RNA. The RRM domain maps to 103 to 181 (KTLFVARVNY…RRVLVDVERG (79 aa)). The residue at position 118 (K118) is an N6-acetyllysine. Position 126 is a phosphotyrosine (Y126). The tract at residues 187-437 (WRPRRLGGGL…NGYLMEAAPE (251 aa)) is disordered. The segment covering 192-201 (LGGGLGGTRR) has biased composition (gly residues). Positions 207-254 (NIRHSGRDDTSRYDERPGPSPLPHRDRDRDRERERRERSRERDKERER) are enriched in basic and acidic residues. Phosphoserine is present on residues S226 and S268. Residues 255–268 (RRSRSRDRRRRSRS) are compositionally biased toward basic residues. Basic and acidic residues-rich tracts occupy residues 269 to 286 (RDKEERRRSRERSKDKDR) and 294 to 310 (RSRERARRERERKEELR). S320 is modified (phosphoserine). Residues 343–393 (PEEKGRDRDRERRRSHRSERERRRDRDRDRDRDREHKRGERGSERGRDEAR) are compositionally biased toward basic and acidic residues. A Glycyl lysine isopeptide (Lys-Gly) (interchain with G-Cter in SUMO2) cross-link involves residue K346. Phosphoserine is present on S410.

As to quaternary structure, component of the U1 snRNP. The U1 snRNP is composed of the U1 snRNA and the 7 core Sm proteins SNRPB, SNRPD1, SNRPD2, SNRPD3, SNRPE, SNRPF and SNRPG that assemble in a heptameric protein ring on the Sm site of the small nuclear RNA to form the core snRNP, and at least three U1 snRNP-specific proteins SNRNP70/U1-70K, SNRPA/U1-A and SNRPC/U1-C. Interacts with SCNM1. Found in a pre-mRNA splicing complex with SFRS4, SFRS5, SNRNP70, SNRPA1, SRRM1 and SRRM2. Found in a pre-mRNA exonic splicing enhancer (ESE) complex with SNRNP70, SNRPA1, SRRM1 and TRA2B/SFRS10. Interacts with dephosphorylated SFRS13A and SFPQ. Interacts with NUDT21/CPSF5, CPSF6, SCAF11, and ZRANB2. Interacts with GEMIN5. Interacts with FUS. Post-translationally, the N-terminus is blocked. Extensively phosphorylated on serine residues in the C-terminal region.

It is found in the nucleus speckle. The protein resides in the nucleus. The protein localises to the nucleoplasm. In terms of biological role, component of the spliceosomal U1 snRNP, which is essential for recognition of the pre-mRNA 5' splice-site and the subsequent assembly of the spliceosome. SNRNP70 binds to the loop I region of U1-snRNA. Its function is as follows. Truncated isoforms that lack the RRM domain cannot bind U1-snRNA. The polypeptide is U1 small nuclear ribonucleoprotein 70 kDa (SNRNP70) (Homo sapiens (Human)).